A 247-amino-acid polypeptide reads, in one-letter code: Ribonuclease PH (247 aa).

Phosphate-binding positions include Arg90 and 128–130 (GTR).

This sequence belongs to the RNase PH family. As to quaternary structure, homohexameric ring arranged as a trimer of dimers.

It catalyses the reaction tRNA(n+1) + phosphate = tRNA(n) + a ribonucleoside 5'-diphosphate. Phosphorolytic 3'-5' exoribonuclease that plays an important role in tRNA 3'-end maturation. Removes nucleotide residues following the 3'-CCA terminus of tRNAs; can also add nucleotides to the ends of RNA molecules by using nucleoside diphosphates as substrates, but this may not be physiologically important. Probably plays a role in initiation of 16S rRNA degradation (leading to ribosome degradation) during starvation. The protein is Ribonuclease PH of Synechococcus sp. (strain CC9605).